The chain runs to 122 residues: Small ribosomal subunit protein uS12 (122 aa).

Asp89 bears the 3-methylthioaspartic acid mark.

It belongs to the universal ribosomal protein uS12 family. Part of the 30S ribosomal subunit. Contacts proteins S8 and S17. May interact with IF1 in the 30S initiation complex.

In terms of biological role, with S4 and S5 plays an important role in translational accuracy. Functionally, interacts with and stabilizes bases of the 16S rRNA that are involved in tRNA selection in the A site and with the mRNA backbone. Located at the interface of the 30S and 50S subunits, it traverses the body of the 30S subunit contacting proteins on the other side and probably holding the rRNA structure together. The combined cluster of proteins S8, S12 and S17 appears to hold together the shoulder and platform of the 30S subunit. The chain is Small ribosomal subunit protein uS12 from Neorickettsia sennetsu (strain ATCC VR-367 / Miyayama) (Ehrlichia sennetsu).